The primary structure comprises 612 residues: Glutamine--fructose-6-phosphate aminotransferase [isomerizing] (612 aa).

Residue cysteine 2 is the Nucleophile; for GATase activity of the active site. In terms of domain architecture, Glutamine amidotransferase type-2 spans 2–219; it reads CGIVGANSTR…EGDIAIISKD (218 aa). SIS domains are found at residues 287–427 and 460–602; these read AKEL…LKNS and ISEY…VDQP. Lysine 607 functions as the For Fru-6P isomerization activity in the catalytic mechanism.

As to quaternary structure, homodimer.

The protein localises to the cytoplasm. The enzyme catalyses D-fructose 6-phosphate + L-glutamine = D-glucosamine 6-phosphate + L-glutamate. Catalyzes the first step in hexosamine metabolism, converting fructose-6P into glucosamine-6P using glutamine as a nitrogen source. The polypeptide is Glutamine--fructose-6-phosphate aminotransferase [isomerizing] (Francisella tularensis subsp. tularensis (strain SCHU S4 / Schu 4)).